We begin with the raw amino-acid sequence, 236 residues long: MEKREELYRGKAKSVYRTDDADRLILLFRNDTSAFDGKRIEQLDRKGAVNNKFNAFIMQKLEAAGIPTQFDTLLSDTECLVKKLDMIPVECVVRNFAAGSLVRRLGVEEGIALTPPTFELFLKNDALGDPFINESHVQAFGWATPEQLAQMKTYSFKVNEVLNKLFEEAGLLLVDFKLEFGLFHGQIVLGDEFSPDGCRLWDKETRKKMDKDRFRQGLGEVIEAYEEVARRLGVPL.

The protein belongs to the SAICAR synthetase family.

It catalyses the reaction 5-amino-1-(5-phospho-D-ribosyl)imidazole-4-carboxylate + L-aspartate + ATP = (2S)-2-[5-amino-1-(5-phospho-beta-D-ribosyl)imidazole-4-carboxamido]succinate + ADP + phosphate + 2 H(+). It functions in the pathway purine metabolism; IMP biosynthesis via de novo pathway; 5-amino-1-(5-phospho-D-ribosyl)imidazole-4-carboxamide from 5-amino-1-(5-phospho-D-ribosyl)imidazole-4-carboxylate: step 1/2. This is Phosphoribosylaminoimidazole-succinocarboxamide synthase from Pseudomonas paraeruginosa (strain DSM 24068 / PA7) (Pseudomonas aeruginosa (strain PA7)).